The sequence spans 166 residues: FMN reductase (NADH) RutF (166 aa).

It belongs to the non-flavoprotein flavin reductase family. RutF subfamily.

The enzyme catalyses FMNH2 + NAD(+) = FMN + NADH + 2 H(+). In terms of biological role, catalyzes the reduction of FMN to FMNH2 which is used to reduce pyrimidine by RutA via the Rut pathway. The sequence is that of FMN reductase (NADH) RutF from Cronobacter turicensis (strain DSM 18703 / CCUG 55852 / LMG 23827 / z3032).